The following is a 690-amino-acid chain: Molting protein mlt-10 (690 aa).

The N-terminal stretch at 1 to 18 (MRNLNLILFTALAAVTYA) is a signal peptide. Asn42 and Asn204 each carry an N-linked (GlcNAc...) asparagine glycan. Residues 219 to 285 (IKKLGEEAKR…MRKKEADEIR (67 aa)) are a coiled coil. 2 N-linked (GlcNAc...) asparagine glycosylation sites follow: Asn305 and Asn415. Helical transmembrane passes span 514–534 (PFIL…FIVL), 544–564 (LSPA…PLIL), 579–599 (FSPI…PGVF), 618–638 (VFTP…TPMV), and 643–663 (ILSP…FAVV).

Belongs to the mlt-10-like family. As to expression, expressed in the major body hypodermal syncytium (Hyp7), the dorsal and ventral ridges of the hypodermis, hypodermal cells in the head and tail, and the pharyngeal myoepithelium, but not the lateral seam cells.

Its subcellular location is the membrane. It is found in the secreted. Its function is as follows. Required for the efficient removal of larval cuticles during the molting cycle as well as the synthesis of new cuticles. In Caenorhabditis elegans, this protein is Molting protein mlt-10.